Reading from the N-terminus, the 860-residue chain is Leucine--tRNA ligase (860 aa).

A 'HIGH' region motif is present at residues Pro-42 to His-52. A 'KMSKS' region motif is present at residues Lys-619 to Ser-623. ATP is bound at residue Lys-622.

This sequence belongs to the class-I aminoacyl-tRNA synthetase family.

The protein localises to the cytoplasm. It carries out the reaction tRNA(Leu) + L-leucine + ATP = L-leucyl-tRNA(Leu) + AMP + diphosphate. The polypeptide is Leucine--tRNA ligase (Sodalis glossinidius (strain morsitans)).